The primary structure comprises 65 residues: Small ribosomal subunit protein bS21 (65 aa).

The protein belongs to the bacterial ribosomal protein bS21 family.

The chain is Small ribosomal subunit protein bS21 from Trichlorobacter lovleyi (strain ATCC BAA-1151 / DSM 17278 / SZ) (Geobacter lovleyi).